The sequence spans 362 residues: Golgi-resident adenosine 3',5'-bisphosphate 3'-phosphatase (362 aa).

The residue at position 1 (Met1) is an N-acetylmethionine. Residues Met1–Gly12 are Cytoplasmic-facing. A helical membrane pass occupies residues Val13–Ala33. The Lumenal segment spans residues Gly34 to Lys362. The interval Arg88–Met109 is disordered. Asp113 (proton acceptor) is an active-site residue. Mg(2+)-binding residues include Glu136, Asp177, Leu179, and Asp180. Catalysis depends on Thr182, which acts as the Proton acceptor. Positions 245 and 248 each coordinate AMP. The N-linked (GlcNAc...) asparagine glycan is linked to Asn262. Positions 271 and 275 each coordinate AMP. Asp303 serves as a coordination point for Mg(2+).

It belongs to the inositol monophosphatase superfamily. The cofactor is Mg(2+). Contains N-linked glycan resistant to endoglycosydase H.

It localises to the golgi apparatus. The protein localises to the trans-Golgi network membrane. It carries out the reaction adenosine 3',5'-bisphosphate + H2O = AMP + phosphate. Its pathway is sulfur metabolism. With respect to regulation, strongly inhibited by lithium. Functionally, exhibits 3'-nucleotidase activity toward adenosine 3',5'-bisphosphate (PAP), namely hydrolyzes adenosine 3',5'-bisphosphate into adenosine 5'-monophosphate (AMP) and a phosphate. May play a role in the formation of skeletal elements derived through endochondral ossification, possibly by clearing adenosine 3',5'-bisphosphate produced by Golgi sulfotransferases during glycosaminoglycan sulfation. Has no activity toward 3'-phosphoadenosine 5'-phosphosulfate (PAPS) or inositol phosphate (IP) substrates including I(1)P, I(1,4)P2, I(1,3,4)P3, I(1,4,5)P3 and I(1,3,4,5)P4. The sequence is that of Golgi-resident adenosine 3',5'-bisphosphate 3'-phosphatase (BPNT2) from Bos taurus (Bovine).